A 429-amino-acid polypeptide reads, in one-letter code: MKKQRNLRSMAAQAIEQVVEQGQSLSNILPPLQQKVSDKDKALLQELCFGVLRTLSQLDWLINKLMARPMTGKQRTVHYLIMVGLYQLLYTRIPPHAALAETVEGAVAIKRPQLKGLINGVLRQFQRQQDELLAEFNASDARYLHPSWLLKRLQKAYPEQWQSIVEANNQRPPMWLRVNRTHHSRDSWLALLDEAGMKGFPHADYPDAVQLETPAPVHALPGFEEGWVTVQDASAQGCMTWLAPQNGEHILDLCAGPGGKTTHILEVAPEAQVLAVDIDEQRLSRVYDNLKRLGMKATVKQGDGRYPSQWCGEQQFDRILLDAPCSATGVIRRHPDIKWLRRDRDIPELAQLQSEILDAIWSHLKSGGTLVYATCSVLPEENSLQIKAFLQRTADAELCETGTPEQPGKQNLPGAEEGDGFFYAKLIKK.

Residues C254–K260, D277, D303, and D322 contribute to the S-adenosyl-L-methionine site. C375 functions as the Nucleophile in the catalytic mechanism.

It belongs to the class I-like SAM-binding methyltransferase superfamily. RsmB/NOP family.

The protein localises to the cytoplasm. The enzyme catalyses cytidine(967) in 16S rRNA + S-adenosyl-L-methionine = 5-methylcytidine(967) in 16S rRNA + S-adenosyl-L-homocysteine + H(+). Functionally, specifically methylates the cytosine at position 967 (m5C967) of 16S rRNA. The polypeptide is Ribosomal RNA small subunit methyltransferase B (Escherichia coli O6:K15:H31 (strain 536 / UPEC)).